A 152-amino-acid chain; its full sequence is Protein FERTILITY RESTORER RF2, mitochondrial (152 aa).

The N-terminal 52 residues, 1–52, are a transit peptide targeting the mitochondrion; sequence MSTLVTCSLPGAVTTHASTRRFGGSQFQTSQASCISFKREVSAKAVLRSVRC. Residues 52–69 are compositionally biased toward polar residues; it reads CNATQTQSAQRKSSTATV. The interval 52-99 is disordered; the sequence is CNATQTQSAQRKSSTATVKRSDPKGKIQGPKLDDGSGGFPPFRFGKGG.

The protein localises to the mitochondrion. Restores fertility in rice varieties with LD-type cytoplasmic male sterility (CMS). CMS is caused by genetic incompatibility between nuclei and mitochondria within male reproductive organs. Corresponds to the functional allele of RF2, which is dependent of the presence of Ile-78 in the japonica cultivars Fukuyama and Owarihatamochi (AC F1SZ42), and indica cultivar Kasalath (AC F1SZ41). Non-functional RF2 alleles are found in japonica cultivars Taichung 65 and Nipponbare (AC F1SZ44), where Ile-78 is replaced by Thr-78. In Oryza sativa subsp. japonica (Rice), this protein is Protein FERTILITY RESTORER RF2, mitochondrial.